Consider the following 257-residue polypeptide: Probable amino-acid ABC transporter ATP-binding protein y4tH (257 aa).

An ABC transporter domain is found at 6–251 (IVFDKVKKAY…PKEERTREFL (246 aa)). 38–45 (GPSGSGKS) is an ATP binding site.

This sequence belongs to the ABC transporter superfamily.

It localises to the cell inner membrane. Probably part of a binding-protein-dependent transport system y4tEFGH for an amino acid. Probably responsible for energy coupling to the transport system. The sequence is that of Probable amino-acid ABC transporter ATP-binding protein y4tH from Sinorhizobium fredii (strain NBRC 101917 / NGR234).